The chain runs to 1040 residues: MINPISFRPGPVTFWTTLIYLALLIPIVIINEEPPAAPKTAEPFKGVNLTEAWLDLTTITRAYHPYNSKFNEEVRRYLLEKVESILEENGATWVFDDQMAAAAKDGKSAAVTVFDDNVSNSTFVMGKSNGTTFTRTESINNAAYFEGTNILVYIRGKEDDDGDWWEADYVHGMRRNAKGLTLVNAHYDSVSTGFGATDDGMGVVTCLQVLKYFTTPGNQPQRGIVVMLNNGEEDWLYGARALGQHKLNPFIHTFLNVEGAGAGGRAIVFRATDREVMAAYARTSHPFGTVIASDAFGMGFISSGTDYSVLVDAYGQRGIDLAFFKPRARYHTNQDDTRHASKESLWHILSASIHTTKQLSGDTGNTFIGQRPDKAHGKVANGRPSNGVWFDLFGKSFVLFGLRGMFAWSLTLLIATPLILVGITWLLRNLDKDYFFTSTVKTKEHPEYEAVPIGGWKGFFRWAMMVSIFYFSFWMIMRGANFVRPSALHRGYANLWLFVFGWIVLVAVTALEDRRRIAAGYIFVFLESAIFLSCLISFVELLALPRKSAYALQVQEDYDGHDHSGYQGYRDSTDGLSSGARAESSASAGSPSSPTVAQEPSKPTAPAGTTNGLSTAPSVAAHSSQPQPAPATPTPGRSTSAPIPSTTPRDEDESEDDDDEATERTPLVGGNGTNDRGRTTFATTYRRSITALVHGARKMEEDGEPYEHEQDWSGHLPSWAWFFQFLLLGPFMIILAAQTGLMLTDAVYQTGSDGSKLFTPYLMIFFFTLLLILPLTPFIHRVTHHIPVFLLVVFIVTLTYNLIAFPFSANNRYKAFFGQYIDVATGENKVCYTGIEEYVRPIIAELPSASGRDVTCGKSLRRGSTIATCCFDGSAVPPKLGSEDLDGLPQDNYADIITVNATRSHKKGDSSRTTARIEITADNTKSCFLQFKKPVSALTIESGSGWDDRFGQYPEDGVGLVRLWHREFDKTWVVNAEWKGSETRKGDDENDGTVICMWSDANTPGTIPALDEALQFVPSWAAVTKFSEGLVEGRKAFKIV.

The Cytoplasmic segment spans residues 1 to 9; the sequence is MINPISFRP. A helical transmembrane segment spans residues 10-30; sequence GPVTFWTTLIYLALLIPIVII. The Vacuolar segment spans residues 31 to 405; the sequence is NEEPPAAPKT…SFVLFGLRGM (375 aa). Asn48, Asn117, Asn120, and Asn129 each carry an N-linked (GlcNAc...) asparagine glycan. His186 and Asp198 together coordinate Zn(2+). Catalysis depends on Glu232, which acts as the Proton acceptor. The Zn(2+) site is built by Glu233, Glu258, and His331. Residues 406–426 traverse the membrane as a helical segment; that stretch reads FAWSLTLLIATPLILVGITWL. Over 427–436 the chain is Cytoplasmic; sequence LRNLDKDYFF. A helical membrane pass occupies residues 437–456; that stretch reads TSTVKTKEHPEYEAVPIGGW. The Vacuolar segment spans residues 457–462; sequence KGFFRW. A helical membrane pass occupies residues 463 to 483; sequence AMMVSIFYFSFWMIMRGANFV. Over 484 to 490 the chain is Cytoplasmic; it reads RPSALHR. The helical transmembrane segment at 491–511 threads the bilayer; sequence GYANLWLFVFGWIVLVAVTAL. Topologically, residues 512 to 521 are vacuolar; sequence EDRRRIAAGY. The helical transmembrane segment at 522–542 threads the bilayer; it reads IFVFLESAIFLSCLISFVELL. Topologically, residues 543–715 are cytoplasmic; the sequence is ALPRKSAYAL…YEHEQDWSGH (173 aa). The segment at 563–680 is disordered; sequence HSGYQGYRDS…NGTNDRGRTT (118 aa). 2 stretches are compositionally biased toward low complexity: residues 577–594 and 616–626; these read SSGA…PSSP and APSVAAHSSQP. Over residues 636 to 647 the composition is skewed to polar residues; the sequence is GRSTSAPIPSTT. Positions 650 to 661 are enriched in acidic residues; it reads DEDESEDDDDEA. The chain crosses the membrane as a helical span at residues 716–736; that stretch reads LPSWAWFFQFLLLGPFMIILA. Residues 737 to 758 are Vacuolar-facing; the sequence is AQTGLMLTDAVYQTGSDGSKLF. Residues 759 to 779 traverse the membrane as a helical segment; it reads TPYLMIFFFTLLLILPLTPFI. At 780–785 the chain is on the cytoplasmic side; the sequence is HRVTHH. The chain crosses the membrane as a helical span at residues 786–806; the sequence is IPVFLLVVFIVTLTYNLIAFP. Residues 807 to 1040 are Vacuolar-facing; it reads FSANNRYKAF…VEGRKAFKIV (234 aa). An N-linked (GlcNAc...) asparagine glycan is attached at Asn900.

The protein belongs to the peptidase M28 family. Zn(2+) is required as a cofactor.

It is found in the vacuole membrane. In terms of biological role, may be involved in vacuolar sorting and osmoregulation. The protein is Vacuolar membrane protease of Sordaria macrospora (strain ATCC MYA-333 / DSM 997 / K(L3346) / K-hell).